A 378-amino-acid chain; its full sequence is Spermatogenic leucine zipper protein 1 (378 aa).

Residues 1–31 (MSDTDNSAEMPARCPSPNPAPGAKQEPPNSG) are disordered. Ser106 carries the phosphoserine modification. Residues 116–122 (KNKIRFK) are interaction with PPP1CC isoform gamma-2. Positions 116–127 (KNKIRFKDDLFI) are helix-loop-helix motif. The basic motif stretch occupies residues 128–193 (HFDPEREQNT…HLRGEYRKLR (66 aa)). Positions 182 to 233 (SLHLRGEYRKLRNNMEQLLQEADHWSKQHNELSELMRSYQECQNETQETTDK) form a coiled coil. Phosphoserine is present on Ser207. A leucine-zipper region spans residues 252 to 273 (LEEQVKKLSHDTHALHLIAALL).

As to quaternary structure, interacts with PPP1CC isoform gamma-2. This interaction can prevent SPZ1 binding to the E-box and inhibits PPP1CC activity. In terms of processing, phosphorylated by MAPK1/ERK2 and MAPK3/ERK1. As to expression, expressed specifically in the testis and epidydimis. In the testis expressed in both germ cells and somatic cells (Sertoli and Leydig cells). Expressed in several tumor cell lines.

Its subcellular location is the cytoplasm. It localises to the nucleus. Its function is as follows. Transcription factor that binds to the DNA sequence 5'-CANNTG-3'(E box) and the G-box motif. Directly binds to a guanine-rich region of the PCNA promoter and up-regulates its expression which in turn induces cell transformation and tumor formation. May play an important role in the regulation of cell proliferation and differentiation during spermatogenesis. The chain is Spermatogenic leucine zipper protein 1 (Spz1) from Mus musculus (Mouse).